The sequence spans 738 residues: Polyphosphate kinase (738 aa).

Positions Met1–Leu48 are disordered. Over residues Ala19–Asp30 the composition is skewed to basic and acidic residues. Position 91 (Asn91) interacts with ATP. Mg(2+) contacts are provided by Arg427 and Arg457. Residue His487 is the Phosphohistidine intermediate of the active site. Positions 520, 620, and 648 each coordinate ATP.

Belongs to the polyphosphate kinase 1 (PPK1) family. It depends on Mg(2+) as a cofactor. Post-translationally, an intermediate of this reaction is the autophosphorylated ppk in which a phosphate is covalently linked to a histidine residue through a N-P bond.

It catalyses the reaction [phosphate](n) + ATP = [phosphate](n+1) + ADP. In terms of biological role, catalyzes the reversible transfer of the terminal phosphate of ATP to form a long-chain polyphosphate (polyP). In Mycobacterium marinum (strain ATCC BAA-535 / M), this protein is Polyphosphate kinase.